Here is a 323-residue protein sequence, read N- to C-terminus: Beta-ketoacyl-[acyl-carrier-protein] synthase III (323 aa).

Residues cysteine 114 and histidine 250 contribute to the active site. Positions 251 to 255 (QANRR) are ACP-binding. Asparagine 280 is a catalytic residue.

Belongs to the thiolase-like superfamily. FabH family. In terms of assembly, homodimer.

It is found in the cytoplasm. The catalysed reaction is malonyl-[ACP] + acetyl-CoA + H(+) = 3-oxobutanoyl-[ACP] + CO2 + CoA. The protein operates within lipid metabolism; fatty acid biosynthesis. In terms of biological role, catalyzes the condensation reaction of fatty acid synthesis by the addition to an acyl acceptor of two carbons from malonyl-ACP. Catalyzes the first condensation reaction which initiates fatty acid synthesis and may therefore play a role in governing the total rate of fatty acid production. Possesses both acetoacetyl-ACP synthase and acetyl transacylase activities. Its substrate specificity determines the biosynthesis of branched-chain and/or straight-chain of fatty acids. The protein is Beta-ketoacyl-[acyl-carrier-protein] synthase III of Rhodospirillum centenum (strain ATCC 51521 / SW).